The sequence spans 321 residues: Epoxyqueuosine reductase (321 aa).

Asp-137 functions as the Proton donor in the catalytic mechanism. In terms of domain architecture, 4Fe-4S ferredoxin-type spans 179–211 (EPLNADPPARSLCGRCSACIDACPTHAIREPFV). 8 residues coordinate [4Fe-4S] cluster: Cys-191, Cys-194, Cys-197, Cys-201, Cys-217, Cys-245, Cys-248, and Cys-252.

Belongs to the QueG family. As to quaternary structure, monomer. Cob(II)alamin serves as cofactor. The cofactor is [4Fe-4S] cluster.

It is found in the cytoplasm. The enzyme catalyses epoxyqueuosine(34) in tRNA + AH2 = queuosine(34) in tRNA + A + H2O. It functions in the pathway tRNA modification; tRNA-queuosine biosynthesis. Catalyzes the conversion of epoxyqueuosine (oQ) to queuosine (Q), which is a hypermodified base found in the wobble positions of tRNA(Asp), tRNA(Asn), tRNA(His) and tRNA(Tyr). The protein is Epoxyqueuosine reductase of Synechococcus sp. (strain CC9605).